The chain runs to 1139 residues: Hapless 2 (1139 aa).

The signal sequence occupies residues Met1 to Ala22. The Extracellular portion of the chain corresponds to Glu23–Arg630. Intrachain disulfides connect Cys33/Cys44, Cys136/Cys164, Cys147/Cys210, Cys165/Cys383, Cys167/Cys190, Cys366/Cys390, and Cys475/Cys482. Residues Ala241 to Pro272 are compositionally biased toward low complexity. The interval Ala241–Arg283 is disordered. N-linked (GlcNAc...) asparagine glycosylation is present at Asn497. Residues Cys515 and Cys556 are joined by a disulfide bond. Thr577 is a glycosylation site (O-linked (GlcNAc...) threonine). The helical transmembrane segment at Leu631–Phe651 threads the bilayer. At Gly652–Lys1139 the chain is on the cytoplasmic side. Disordered regions lie at residues Gly689–Ala719 and His741–Lys1139. Over residues Gln753–Ala767 the composition is skewed to basic and acidic residues. The span at Gly770 to Ser789 shows a compositional bias: low complexity. Over residues Trp829–Gly851 the composition is skewed to basic and acidic residues. A compositionally biased stretch (gly residues) spans Tyr868 to Gly884. A compositionally biased stretch (pro residues) spans Ala887–Pro904. Composition is skewed to gly residues over residues Pro919–Gln943 and Arg955–Gly965. The segment covering Gly978–Gln991 has biased composition (pro residues). Basic and acidic residues predominate over residues Gly1018–Gly1029. The segment covering Gly1040–Gly1049 has biased composition (gly residues). A compositionally biased stretch (pro residues) spans Ile1054 to Tyr1067. Composition is skewed to gly residues over residues Gly1078–Gly1096 and Gly1106–Arg1118.

The protein belongs to the HAP2/GCS1 family. As to quaternary structure, monomer. Homotrimer. Membrane contact and insertion (via its extracellular domain) into a lipid membrane probably triggers trimerization. Post-translationally, the protein present at the cell membrane is rapidly degraded after fusion between male (minus) and female (plus) gametes, contrary to the protein present in intracellular pools. This may represent a mechanism to avoid fusion of several male gametes with a single female gamete. N-glycosylated.

Its subcellular location is the cell membrane. It localises to the cell projection. It is found in the cytoplasmic vesicle membrane. Its function is as follows. During fertilization, required on male (minus) gametes for their fusion with female (plus) gametes. Required for membrane fusion, but not for the initial adhesion between gametes. Inserts (via its extracellular domain) into lipid membranes (in vitro). Probably initiates the fusion of gamete cell membranes by inserting its extracellular domain into the cell membrane of a female gamete. The polypeptide is Hapless 2 (Chlamydomonas reinhardtii (Chlamydomonas smithii)).